Here is a 469-residue protein sequence, read N- to C-terminus: Carboxypeptidase Q (469 aa).

The N-terminal stretch at 1 to 19 is a signal peptide; sequence MKTLILTLLSLYELQLCCG. The propeptide occupies 20 to 42; that stretch reads AYNQNIRSQRKFEMIKTEISSYK. Asn59 and Asn159 each carry an N-linked (GlcNAc...) asparagine glycan. Residues His288 and Asp300 each contribute to the Zn(2+) site. Glu334 (nucleophile) is an active-site residue. A Zn(2+)-binding site is contributed by Glu335. Asn351 carries an N-linked (GlcNAc...) asparagine glycan. Asp362 contacts Zn(2+). Asn394 carries N-linked (GlcNAc...) asparagine glycosylation. His432 lines the Zn(2+) pocket.

The protein belongs to the peptidase M28 family. As to quaternary structure, homodimer. The monomeric form is inactive while the homodimer is active.

The protein localises to the endoplasmic reticulum. It localises to the golgi apparatus. The protein resides in the lysosome. It is found in the secreted. Carboxypeptidase that may play an important role in the hydrolysis of circulating peptides. Catalyzes more efficiently the hydrolysis of dipeptides with unsubstituted terminals into amino acids. The polypeptide is Carboxypeptidase Q (cpq) (Xenopus laevis (African clawed frog)).